A 421-amino-acid polypeptide reads, in one-letter code: Aspartokinase (421 aa).

7–10 (KYGG) lines the ATP pocket. Substrate is bound at residue 25-30 (RIVATK). Residue serine 41 coordinates ATP. Residues 45-49 (DTTDE), glutamate 74, 125-126 (LD), 151-154 (RGGS), and serine 154 each bind substrate. Residues 174-175 (SD), 180-185 (YTADPR), and lysine 210 each bind ATP. 2 consecutive ACT domains span residues 267-343 (VTVL…YDDQ) and 349-421 (LVGA…GTGR). Residues aspartate 274, 274–279 (DKPGEA), 292–294 (NID), glutamine 298, 360–361 (VT), 374–375 (NV), and 381–382 (SE) contribute to the substrate site.

This sequence belongs to the aspartokinase family. Tetramer consisting of 2 isoforms Alpha (catalytic and regulation) and of a homodimer of 2 isoforms Beta (regulation).

The catalysed reaction is L-aspartate + ATP = 4-phospho-L-aspartate + ADP. Its pathway is amino-acid biosynthesis; L-lysine biosynthesis via DAP pathway; (S)-tetrahydrodipicolinate from L-aspartate: step 1/4. The protein operates within amino-acid biosynthesis; L-methionine biosynthesis via de novo pathway; L-homoserine from L-aspartate: step 1/3. It functions in the pathway amino-acid biosynthesis; L-threonine biosynthesis; L-threonine from L-aspartate: step 1/5. Its function is as follows. Catalyzes the phosphorylation of the beta-carboxyl group of aspartic acid with ATP to yield 4-phospho-L-aspartate, which is involved in the branched biosynthetic pathway leading to the biosynthesis of amino acids lysine, threonine, isoleucine and methionine. This chain is Aspartokinase (lysC), found in Corynebacterium efficiens (strain DSM 44549 / YS-314 / AJ 12310 / JCM 11189 / NBRC 100395).